The primary structure comprises 341 residues: Limbic system-associated membrane protein (341 aa).

A signal peptide spans 1 to 28; it reads MVGRVQPDRKQLPLVLLRLLCLLPTGLP. Ig-like domains follow at residues 29–122, 132–214, and 219–304; these read VRSV…PKTS, PKIS…VKVT, and PTIT…ASLV. Asparagine 40 and asparagine 66 each carry an N-linked (GlcNAc...) asparagine glycan. The cysteines at positions 53 and 111 are disulfide-linked. Phosphotyrosine is present on tyrosine 94. N-linked (GlcNAc...) asparagine glycosylation is found at asparagine 136 and asparagine 148. Cystine bridges form between cysteine 153–cysteine 197 and cysteine 239–cysteine 290. 3 N-linked (GlcNAc...) asparagine glycosylation sites follow: asparagine 279, asparagine 287, and asparagine 300.

This sequence belongs to the immunoglobulin superfamily. IgLON family.

It localises to the cell membrane. Its function is as follows. Mediates selective neuronal growth and axon targeting. Contributes to the guidance of developing axons and remodeling of mature circuits in the limbic system. Essential for normal growth of the hippocampal mossy fiber projection. The sequence is that of Limbic system-associated membrane protein (Lsamp) from Mus musculus (Mouse).